Consider the following 92-residue polypeptide: Small ribosomal subunit protein uS19 (92 aa).

The protein belongs to the universal ribosomal protein uS19 family.

In terms of biological role, protein S19 forms a complex with S13 that binds strongly to the 16S ribosomal RNA. This chain is Small ribosomal subunit protein uS19, found in Jannaschia sp. (strain CCS1).